We begin with the raw amino-acid sequence, 133 residues long: Mediator of RNA polymerase II transcription subunit 10 (133 aa).

It belongs to the Mediator complex subunit 10 family. Component of the Mediator complex. Interacts with MED4 and MED21.

Its subcellular location is the nucleus. Its function is as follows. Component of the Mediator complex, a coactivator involved in the regulated transcription of nearly all RNA polymerase II-dependent genes. Mediator functions as a bridge to convey information from gene-specific regulatory proteins to the basal RNA polymerase II transcription machinery. Mediator is recruited to promoters by direct interactions with regulatory proteins and serves as a scaffold for the assembly of a functional preinitiation complex with RNA polymerase II and the general transcription factors. Required for activated transcription of the MtnA, MtnB and MtnD genes. In Drosophila melanogaster (Fruit fly), this protein is Mediator of RNA polymerase II transcription subunit 10 (MED10).